The primary structure comprises 62 residues: Photosystem II reaction center protein Z (62 aa).

The next 2 membrane-spanning stretches (helical) occupy residues A8 to A28 and F41 to I61.

It belongs to the PsbZ family. As to quaternary structure, PSII is composed of 1 copy each of membrane proteins PsbA, PsbB, PsbC, PsbD, PsbE, PsbF, PsbH, PsbI, PsbJ, PsbK, PsbL, PsbM, PsbT, PsbY, PsbZ, Psb30/Ycf12, at least 3 peripheral proteins of the oxygen-evolving complex and a large number of cofactors. It forms dimeric complexes.

It is found in the plastid. The protein resides in the chloroplast thylakoid membrane. Functionally, may control the interaction of photosystem II (PSII) cores with the light-harvesting antenna, regulates electron flow through the 2 photosystem reaction centers. PSII is a light-driven water plastoquinone oxidoreductase, using light energy to abstract electrons from H(2)O, generating a proton gradient subsequently used for ATP formation. The chain is Photosystem II reaction center protein Z from Huperzia lucidula (Shining clubmoss).